Consider the following 206-residue polypeptide: Imidazole glycerol phosphate synthase subunit HisH (206 aa).

The 202-residue stretch at S5–L206 folds into the Glutamine amidotransferase type-1 domain. The Nucleophile role is filled by C83. Active-site residues include H187 and E189.

Heterodimer of HisH and HisF.

It is found in the cytoplasm. The catalysed reaction is 5-[(5-phospho-1-deoxy-D-ribulos-1-ylimino)methylamino]-1-(5-phospho-beta-D-ribosyl)imidazole-4-carboxamide + L-glutamine = D-erythro-1-(imidazol-4-yl)glycerol 3-phosphate + 5-amino-1-(5-phospho-beta-D-ribosyl)imidazole-4-carboxamide + L-glutamate + H(+). It catalyses the reaction L-glutamine + H2O = L-glutamate + NH4(+). Its pathway is amino-acid biosynthesis; L-histidine biosynthesis; L-histidine from 5-phospho-alpha-D-ribose 1-diphosphate: step 5/9. IGPS catalyzes the conversion of PRFAR and glutamine to IGP, AICAR and glutamate. The HisH subunit catalyzes the hydrolysis of glutamine to glutamate and ammonia as part of the synthesis of IGP and AICAR. The resulting ammonia molecule is channeled to the active site of HisF. The chain is Imidazole glycerol phosphate synthase subunit HisH from Mycolicibacterium paratuberculosis (strain ATCC BAA-968 / K-10) (Mycobacterium paratuberculosis).